Here is a 263-residue protein sequence, read N- to C-terminus: Protein M1627_2099 (263 aa).

It belongs to the CinA family.

The polypeptide is Protein M1627_2099 (Saccharolobus islandicus (strain M.16.27) (Sulfolobus islandicus)).